A 377-amino-acid polypeptide reads, in one-letter code: Terpene synthase 1 (377 aa).

The DDxx(x)D/E motif signature appears at 81 to 86 (DDALDA). An NDxxSxxxD/E motif motif is present at residues 221 to 229 (NDLVSYEKE). Residues 326–359 (RKQSSSPNLTNSISIPTNNTNNSNNITSSPNKKQ) are disordered. Over residues 335-356 (TNSISIPTNNTNNSNNITSSPN) the composition is skewed to low complexity.

Belongs to the terpene synthase family.

The catalysed reaction is (2E,6E)-farnesyl diphosphate = (2S,3R,6S,9S)-(-)-protoillud-7-ene + diphosphate. In terms of biological role, terpene synthase that converts its substrate farnesyl diphosphate (FPP) into the sesquiterpene protoillud-7-ene. This chain is Terpene synthase 1, found in Dictyostelium purpureum (Slime mold).